The primary structure comprises 102 residues: Small ribosomal subunit protein uS10 (102 aa).

The protein belongs to the universal ribosomal protein uS10 family. In terms of assembly, part of the 30S ribosomal subunit.

In terms of biological role, involved in the binding of tRNA to the ribosomes. This is Small ribosomal subunit protein uS10 from Kineococcus radiotolerans (strain ATCC BAA-149 / DSM 14245 / SRS30216).